Reading from the N-terminus, the 110-residue chain is ATP-dependent Clp protease adapter protein ClpS (110 aa).

Belongs to the ClpS family. In terms of assembly, binds to the N-terminal domain of the chaperone ClpA.

Involved in the modulation of the specificity of the ClpAP-mediated ATP-dependent protein degradation. In Bartonella quintana (strain Toulouse) (Rochalimaea quintana), this protein is ATP-dependent Clp protease adapter protein ClpS.